Here is a 200-residue protein sequence, read N- to C-terminus: HTH-type transcriptional regulator Hpr (200 aa).

Positions 13–157 constitute an HTH marR-type domain; the sequence is AMLFSQRIAQ…MMCIVRNIYG (145 aa). Positions 63 to 86 form a DNA-binding region, H-T-H motif; that stretch reads ISEIAKFGVMHVSTAFNFSKKLEE.

In terms of assembly, homodimer.

Functionally, negative regulator of protease production and sporulation. This is HTH-type transcriptional regulator Hpr from Geobacillus thermodenitrificans (strain NG80-2).